Consider the following 421-residue polypeptide: MATALQKPGMVPPPPGEESQTVILPPGWHSYLSPQGRRYYVNTTTNETTWERPSSSPGISASPAPHRSSLPTTVNGYHASGTPAHPPETAHMSLRKSTGDSQNLGSSSPGRKQSKENTITINCVTFPHPDTMPEQQLLKPTEWSYCDYFWADKKDPQGNGTVAGFELLLQKQLKGKQMQKEMSEFIRERIKIEEEYAKNLAKLSQNSLAAQEEGSLGEAWAQVKKSLADEAEVHLKFSAKLHSEVEKPLMNFRENFKKDMKKCDHHIADLRKQLASRYASVEKARKALTERQKDLEMKTQQLEIKLSNKTEEDIKKARRKSTQAGDDLMRCVDLYNQAQSKWFEEMVTTTLELERLEVERVEMIRQHLCQYTQLRHETDMFNQSTVEPVDQLLRKVDPAKDRELWVREHKTGNIRPVDMEI.

The interval 1-117 (MATALQKPGM…SPGRKQSKEN (117 aa)) is disordered. The 34-residue stretch at 22 to 55 (VILPPGWHSYLSPQGRRYYVNTTTNETTWERPSS) folds into the WW domain. Over residues 41–52 (VNTTTNETTWER) the composition is skewed to polar residues. Residues 53 to 65 (PSSSPGISASPAP) are compositionally biased toward low complexity. 2 positions are modified to phosphoserine: serine 62 and serine 108. Residues 95–117 (RKSTGDSQNLGSSSPGRKQSKEN) are compositionally biased toward polar residues. Residues 141–401 (TEWSYCDYFW…LLRKVDPAKD (261 aa)) form the F-BAR domain. The stretch at 254–328 (ENFKKDMKKC…RKSTQAGDDL (75 aa)) forms a coiled coil.

Expressed abundantly in brain with lower levels in heart and testis. In the brain, expressed prominently in the Purkinje layer of the cerebellum, moderately in hippocampus, and less extensively in cerebral cortex and caudate putamen.

Its subcellular location is the cytoplasm. Functionally, may play a role in promoting maturation and morphological differentiation of cerebellar neurons. This chain is Growth arrest-specific protein 7 (Gas7), found in Mus musculus (Mouse).